Here is a 254-residue protein sequence, read N- to C-terminus: Alcohol dehydrogenase (254 aa).

10-33 (FVAGLGGIGLDTSREIVKSGPKNL) contacts NAD(+). Ser-138 is a binding site for substrate. Tyr-151 (proton acceptor) is an active-site residue.

Belongs to the short-chain dehydrogenases/reductases (SDR) family. In terms of assembly, homodimer.

It carries out the reaction a primary alcohol + NAD(+) = an aldehyde + NADH + H(+). It catalyses the reaction a secondary alcohol + NAD(+) = a ketone + NADH + H(+). This is Alcohol dehydrogenase (Adh) from Drosophila adiastola (Fruit fly).